A 513-amino-acid chain; its full sequence is Zinc finger CCCH-type with G patch domain-containing protein (513 aa).

A C3H1-type zinc finger spans residues 155–178 (PCSYYLEGECRFDETKCRFSHGAL). 2 stretches are compositionally biased toward acidic residues: residues 252-261 (DQDEDDELSS) and 271-283 (DSSD…MDDL). The disordered stretch occupies residues 252–283 (DQDEDDELSSEESNSSMNDDSSDEAESDMDDL). Residues 312–358 (TRGIGSKLMEKMGYIHGTGLGSDGRGIVTPVSAQILPQGRSLDACME) form the G-patch domain. A compositionally biased stretch (basic and acidic residues) spans 455 to 467 (DMAKVKQSLDRNS). The segment at 455-513 (DMAKVKQSLDRNSGDAQLQKRLQVQMESHKQELATLQAQERSLSKEQQTRKSKNKMFEF) is disordered. Polar residues predominate over residues 468-480 (GDAQLQKRLQVQM). Over residues 496–513 (SLSKEQQTRKSKNKMFEF) the composition is skewed to basic and acidic residues.

The protein localises to the nucleus. In terms of biological role, transcription repressor. This chain is Zinc finger CCCH-type with G patch domain-containing protein, found in Drosophila yakuba (Fruit fly).